The chain runs to 176 residues: T cell receptor beta constant 1 (176 aa).

The Ig-like C1-type domain maps to 8-117 (PEVAVFEPSE…WTQDRAKPVT (110 aa)). Cysteines 30 and 95 form a disulfide. A glycan (N-linked (GlcNAc...) asparagine) is linked at N69. Residues 130-144 (CGFTSVSYQQGVLSA) are connecting peptide. The helical transmembrane segment at 150 to 170 (ILLGKATLYAVLVSALVLMAM) threads the bilayer. Residues 171-176 (VKRKDF) lie on the Cytoplasmic side of the membrane.

As to quaternary structure, alpha-beta TR is a heterodimer composed of an alpha and beta chain; disulfide-linked. The alpha-beta TR is associated with the transmembrane signaling CD3 coreceptor proteins to form the TR-CD3 (TcR or TCR). The assembly of alpha-beta TR heterodimers with CD3 occurs in the endoplasmic reticulum where a single alpha-beta TR heterodimer associates with one CD3D-CD3E heterodimer, one CD3G-CD3E heterodimer and one CD247 homodimer forming a stable octameric structure. CD3D-CD3E and CD3G-CD3E heterodimers preferentially associate with TR alpha and TR beta chains, respectively. The association of the CD247 homodimer is the last step of TcR assembly in the endoplasmic reticulum and is required for transport to the cell surface.

The protein localises to the cell membrane. Functionally, constant region of T cell receptor (TR) beta chain. Alpha-beta T cell receptors are antigen specific receptors which are essential to the immune response and are present on the cell surface of T lymphocytes. Recognize peptide-major histocompatibility (MH) (pMH) complexes that are displayed by antigen presenting cells (APC), a prerequisite for efficient T cell adaptive immunity against pathogens. Binding of alpha-beta TR to pMH complex initiates TR-CD3 clustering on the cell surface and intracellular activation of LCK that phosphorylates the ITAM motifs of CD3G, CD3D, CD3E and CD247 enabling the recruitment of ZAP70. In turn, ZAP70 phosphorylates LAT, which recruits numerous signaling molecules to form the LAT signalosome. The LAT signalosome propagates signal branching to three major signaling pathways, the calcium, the mitogen-activated protein kinase (MAPK) kinase and the nuclear factor NF-kappa-B (NF-kB) pathways, leading to the mobilization of transcription factors that are critical for gene expression and essential for T cell growth and differentiation. The T cell repertoire is generated in the thymus, by V-(D)-J rearrangement. This repertoire is then shaped by intrathymic selection events to generate a peripheral T cell pool of self-MH restricted, non-autoaggressive T cells. Post-thymic interaction of alpha-beta TR with the pMH complexes shapes TR structural and functional avidity. The polypeptide is T cell receptor beta constant 1 (Homo sapiens (Human)).